Here is a 554-residue protein sequence, read N- to C-terminus: Probable urocanate hydratase (554 aa).

Residues 49-50 (GG), Q127, E194, 240-241 (NA), 261-265 (QTAAH), 271-272 (YI), and Y320 contribute to the NAD(+) site. The active site involves C408. Residue G490 coordinates NAD(+).

It belongs to the urocanase family. NAD(+) is required as a cofactor.

It localises to the cytoplasm. It catalyses the reaction 4-imidazolone-5-propanoate = trans-urocanate + H2O. It participates in amino-acid degradation; L-histidine degradation into L-glutamate; N-formimidoyl-L-glutamate from L-histidine: step 2/3. In terms of biological role, catalyzes the conversion of urocanate to 4-imidazolone-5-propionate. This is Probable urocanate hydratase from Thermoplasma acidophilum (strain ATCC 25905 / DSM 1728 / JCM 9062 / NBRC 15155 / AMRC-C165).